An 883-amino-acid polypeptide reads, in one-letter code: Ankyrin repeat and SAM domain-containing protein 6 (883 aa).

ANK repeat units lie at residues 8–37 (PGLQLLLRACEQGDTDTARRLLEPGADPVA), 68–97 (AGNSALQLAAAGGHEPLVRFLLRRGASVNS), 101–130 (YGWSALMQAARCGHVSVAHLLLDHGADVNA), 134–163 (LGASVLTVASRGGHLGVVKLLLEAGAIVDH), 181–210 (LGITALMAAVQHGHEAVVRLLMEWGADPNH), 215–244 (VGWSPLMLAALLGKLNVAQQLVEKGANPDH), 282–312 (KRRPDIFYALKMGNFQLVKEIADEDPNHVNL), 316–345 (DGATPLMLAAVTGHLPLVQLLVEKHADMDK), 350–379 (HGWTALMQATYHGNKEIVKYLLNQGADVAL), and 383–414 (NGYTAFDLVMLLNDPDTELVRLLASVCMQVNK). The tract at residues 30-50 (EPGADPVAGPEAGAEPAGPEA) is disordered. Disordered stretches follow at residues 414–439 (KDRGRPSHRPPLPHSKARQPWSIPVL), 490–522 (MRAPPQDRTSHLGPPEAAHATKDSGPGNPRREK), 566–773 (SHTC…ITDE), and 852–883 (SFESSASNTRAPGNGPSMAGWTRPEETVSSRR). The span at 566-576 (SHTCHNGKADP) shows a compositional bias: basic and acidic residues. Over residues 607–630 (PSISRSPASPASSGSFNHSPHSSG) the composition is skewed to low complexity. Residues 631-640 (GASGIGGMSR) are compositionally biased toward gly residues. Ser-649 is subject to Phosphoserine. The span at 649–661 (SGGSVDSVLSQIA) shows a compositional bias: polar residues. 2 stretches are compositionally biased toward low complexity: residues 687–711 (SSSPPELPASLPSSGSGSSSGPSSS) and 720–737 (PPSGTSATSKSTSPTLTP). Phosphoserine occurs at positions 732 and 740. The segment covering 748–768 (SSVSSSSSHRQSKSSGGSSSG) has biased composition (low complexity). The SAM domain occupies 771–834 (TDEDELTGIL…LAAISELNAG (64 aa)). Residues 852 to 862 (SFESSASNTRA) show a composition bias toward polar residues. A compositionally biased stretch (basic and acidic residues) spans 874-883 (RPEETVSSRR).

As to quaternary structure, homooligomer. Interacts with NEK8. Central component of a complex containing at least ANKS6, INVS, NEK8 and NPHP3. ANKS6 may organize complex assembly by linking INVS and NPHP3 to NEK8 and INVS may target the complex to the proximal ciliary axoneme. Interacts (via SAM domain) with BICC1 (via KH domains) in an RNA-dependent manner. Interacts (via SAM domain) with ANKS3 (via SAM domain). Post-translationally, hydroxylated at Asn-129, most probably by HIF1AN. This hydroxylation results in decreased NEK8-binding. As to expression, expressed in kidney (at protein level).

Its subcellular location is the cell projection. It is found in the cilium. The protein resides in the cytoplasm. In terms of biological role, required for renal function. The polypeptide is Ankyrin repeat and SAM domain-containing protein 6 (Anks6) (Mus musculus (Mouse)).